The following is a 185-amino-acid chain: Neuronal vesicle trafficking-associated protein 1 (185 aa).

Residues 1 to 82 (MVKLGNNFAE…ITEGVTERFK (82 aa)) are Cytoplasmic-facing. The chain crosses the membrane as a helical; Signal-anchor for type II membrane protein span at residues 83 to 103 (VSVLVLFALAFLTCVVFLVVY). The Lumenal segment spans residues 104 to 185 (KVYKYDRACP…QETEAAEKSA (82 aa)). The interval 129–164 (ESYYTEQDSSAREKFYTVINHYNVAKQSITRSVSPW) is required for GRIP1 interaction.

Belongs to the NSG family. As to quaternary structure, forms a complex with GRIP1, GRIA2 and STX12 through direct interaction with GRIP1; controls the intracellular fate of AMPAR and the endosomal sorting of the GRIA2 subunit toward recycling and membrane targeting. Interacts with STX12. Interacts with APP; could regulate APP processing. Interacts with FAM171A1. Pituitary and less in adrenal gland and testis. Expressed in the hippocampus throughout development. At P0, highly and broadly expressed throughout the cortical plate, but is down-regulated overall at P8 and P14, but remains relatively enriched in layer V. At P0 is expressed ubiquitously in the developing cerebellum namely Purkinje neurons as well as granule neurons. However, it becomes restricted to Purkinje cells by P8. This exclusive expression in Purkinje cells is maintained throughout adulthood.

Its subcellular location is the membrane. It localises to the golgi apparatus. The protein localises to the trans-Golgi network membrane. It is found in the endosome membrane. The protein resides in the cell projection. Its subcellular location is the dendrite. It localises to the early endosome membrane. The protein localises to the late endosome membrane. It is found in the lysosome lumen. The protein resides in the recycling endosome membrane. Its subcellular location is the cytoplasmic vesicle membrane. It localises to the golgi stack membrane. The protein localises to the endosome. It is found in the multivesicular body membrane. The protein resides in the endoplasmic reticulum membrane. Functionally, plays a role in the recycling mechanism in neurons of multiple receptors, including AMPAR, APP and L1CAM and acts at the level of early endosomes to promote sorting of receptors toward a recycling pathway. Regulates sorting and recycling of GRIA2 through interaction with GRIP1 and then contributes to the regulation of synaptic transmission and plasticity by affecting the recycling and targeting of AMPA receptors to the synapse. Is required for faithful sorting of L1CAM to axons by facilitating trafficking from somatodendritic early endosome or the recycling endosome. In an other hand, induces apoptosis via the activation of CASP3 in response to DNA damage. This Mus musculus (Mouse) protein is Neuronal vesicle trafficking-associated protein 1.